We begin with the raw amino-acid sequence, 113 residues long: Putative hemolysin E-like protein (113 aa).

The protein belongs to the hemolysin E family.

The protein is Putative hemolysin E-like protein of Shigella flexneri.